The primary structure comprises 398 residues: Cathepsin E (398 aa).

Residues 1–21 (MKPLFVLLLLLLLLDLAQAQG) form the signal peptide. Residues 22 to 58 (VLHRVPLRRHQSLRKKLRAQGQLSDFWRSHNLDMIEF) constitute a propeptide, activation peptide. Positions 80–394 (YFGTVSIGSP…DRGNNQVGLA (315 aa)) constitute a Peptidase A1 domain. The N-linked (GlcNAc...) asparagine glycan is linked to Asn92. Residue Asp98 is part of the active site. 2 disulfides stabilise this stretch: Cys111–Cys116 and Cys274–Cys278. The active site involves Asp283.

It belongs to the peptidase A1 family. In terms of assembly, homodimer; disulfide-linked. Post-translationally, glycosylated. The nature of the carbohydrate chain varies between cell types. In brain microglia, the proenzyme contains a high mannose-type oligosaccharide, while the mature enzyme contains a complex-type oligosaccharide. In stomach and spleen, the mature enzyme contains a high mannose-type oligosaccharide. In erythrocyte membranes, the mature enzyme contains a complex-type oligosaccharide. Expressed abundantly in lymphocytes and macrophages of the thymus and spleen, and in the M cells of the intestine. In the brain, expression is limited to reactive microglial cells, the large pyrimidial neurons in the cerebral cortex, the CA1 and CA3 pyrimidial neurons of the hippocampus, the large neurons of the neostriatum, and the Purkinje neurons of the cerebellum.

It is found in the endosome. It carries out the reaction Similar to cathepsin D, but slightly broader specificity.. Functionally, may have a role in immune function. Probably involved in the processing of antigenic peptides during MHC class II-mediated antigen presentation. May play a role in activation-induced lymphocyte depletion in the thymus, and in neuronal degeneration and glial cell activation in the brain. The sequence is that of Cathepsin E (Ctse) from Rattus norvegicus (Rat).